Consider the following 861-residue polypeptide: Xylan 1,4-beta-xylosidase (861 aa).

An N-terminal signal peptide occupies residues 1 to 19 (MKYQLFLSLALCVGLGASA). Asp269 acts as the Nucleophile in catalysis. A PA14 domain is found at 458 to 600 (DGKKGLKGTF…DYQETIAQLK (143 aa)). Glu616 (proton donor/acceptor) is an active-site residue.

The protein belongs to the glycosyl hydrolase 3 family. In terms of assembly, exists as a large polymeric species, presumably as a homononamer.

It catalyses the reaction Hydrolysis of (1-&gt;4)-beta-D-xylans, to remove successive D-xylose residues from the non-reducing termini.. The enzyme catalyses Hydrolysis of terminal non-reducing alpha-L-arabinofuranoside residues in alpha-L-arabinosides.. Its pathway is glycan degradation; xylan degradation. Its function is as follows. Involved in degradation of plant cell wall polysaccharides. Has beta-xylosidase activity via its capacity to hydrolyze glycosidic linkages of beta-1,4-xylo-oligosaccharides of various lengths (X2 to X6), releasing xylose monomers. To a much lesser extent, also has alpha-L-arabinofuranosidase activity. Does not possess beta-D-glucosidase activity. Acts synergistically with Xyn10D-Fae1A to increase the release of xylose from xylan. The protein is Xylan 1,4-beta-xylosidase of Xylanibacter ruminicola (strain ATCC 19189 / DSM 19721 / CIP 105475 / JCM 8958 / 23) (Prevotella ruminicola).